Consider the following 748-residue polypeptide: Histone-lysine N-methyltransferase EZH2 (748 aa).

A compositionally biased stretch (acidic residues) spans 184-199 (YEDDEDGDDNQDDEQD). Disordered regions lie at residues 184–220 (YEDD…LRKF) and 342–428 (AERI…NIEP). Positions 200-220 (DTAKDQDDNMEDKETQPLRKF) are enriched in basic and acidic residues. Over residues 347-359 (TPPKRPSGRRRGR) the composition is skewed to basic residues. The span at 362 to 374 (NNTSRPSTPTVNV) shows a compositional bias: polar residues. Positions 376-387 (EAKDTDSDREAG) are enriched in basic and acidic residues. A CXC domain is found at 505–607 (CRKIQLKKDG…SKNVSCKNCS (103 aa)). The SET domain maps to 614–729 (KHLLLAPSDV…TGEELFFDYR (116 aa)).

The protein belongs to the class V-like SAM-binding methyltransferase superfamily. Histone-lysine methyltransferase family. EZ subfamily. Component of the prc2/eed-ezh2 complex.

It localises to the nucleus. It carries out the reaction L-lysyl(27)-[histone H3] + 3 S-adenosyl-L-methionine = N(6),N(6),N(6)-trimethyl-L-lysyl(27)-[histone H3] + 3 S-adenosyl-L-homocysteine + 3 H(+). Functionally, polycomb group (PcG) protein. Catalytic subunit of the prc2/eed-ezh2 complex, which methylates 'Lys-9' and 'Lys-27' of histone H3, leading to transcriptional repression of the affected target gene. May repress transcription of the egr2 and en2 genes. May regulate the circadian clock via histone methylation at the promoter of the circadian genes. The sequence is that of Histone-lysine N-methyltransferase EZH2 (ezh2-a) from Xenopus laevis (African clawed frog).